Here is a 106-residue protein sequence, read N- to C-terminus: MNDSEFHRLADQLWLTIEERLDYWDGDSDIDCEINGGVLTITFENGSKIIINRQEPLHQVWLATKQGGYHFDLKGDEWICDRSGETFWDLLEQAATQQAGETVSFR.

This sequence belongs to the frataxin family.

Involved in iron-sulfur (Fe-S) cluster assembly. May act as a regulator of Fe-S biogenesis. The chain is Iron-sulfur cluster assembly protein CyaY from Escherichia coli O9:H4 (strain HS).